Consider the following 1399-residue polypeptide: DNA-directed RNA polymerase subunit beta' (1399 aa).

Zn(2+) contacts are provided by Cys71, Cys73, Cys86, and Cys89. The Mg(2+) site is built by Asp462, Asp464, and Asp466. Zn(2+) contacts are provided by Cys810, Cys884, Cys891, and Cys894.

This sequence belongs to the RNA polymerase beta' chain family. As to quaternary structure, the RNAP catalytic core consists of 2 alpha, 1 beta, 1 beta' and 1 omega subunit. When a sigma factor is associated with the core the holoenzyme is formed, which can initiate transcription. Mg(2+) serves as cofactor. It depends on Zn(2+) as a cofactor.

The enzyme catalyses RNA(n) + a ribonucleoside 5'-triphosphate = RNA(n+1) + diphosphate. In terms of biological role, DNA-dependent RNA polymerase catalyzes the transcription of DNA into RNA using the four ribonucleoside triphosphates as substrates. This is DNA-directed RNA polymerase subunit beta' from Chelativorans sp. (strain BNC1).